The sequence spans 86 residues: Large ribosomal subunit protein bL27 (86 aa).

Residues Met1–Val23 are disordered.

Belongs to the bacterial ribosomal protein bL27 family.

In Prochlorococcus marinus (strain MIT 9515), this protein is Large ribosomal subunit protein bL27.